The following is a 247-amino-acid chain: Capsid protein (247 aa).

Positions M1–A28 match the Bipartite nuclear localization signal motif. Residues M1–R39 are disordered. A compositionally biased stretch (basic residues) spans S16–R26.

This sequence belongs to the geminiviridae capsid protein family. Homomultimer. Interacts with the movement protein. Binds to single-stranded and double-stranded viral DNA.

It is found in the virion. The protein localises to the host nucleus. Functionally, encapsidates the viral genome into characteristic twinned ('geminate') particles. Binds the genomic viral ssDNA and shuttles it into and out of the cell nucleus. Plays a role in protection of the genome from degradation, virus acquisition and transmission by insect vectors, infectivity, and systemic movement. The CP of monopartite geminiviruses is absolutely essential for virus movement. The sequence is that of Capsid protein from Megathyrsus maximus (PanSV).